We begin with the raw amino-acid sequence, 419 residues long: UDP-N-acetylglucosamine 1-carboxyvinyltransferase (419 aa).

22–23 lines the phosphoenolpyruvate pocket; the sequence is KN. Arg93 provides a ligand contact to UDP-N-acetyl-alpha-D-glucosamine. The active-site Proton donor is Cys117. Cys117 is subject to 2-(S-cysteinyl)pyruvic acid O-phosphothioketal. UDP-N-acetyl-alpha-D-glucosamine is bound by residues 122 to 126, Asp308, and Ile330; that span reads RPVDL.

This sequence belongs to the EPSP synthase family. MurA subfamily.

The protein resides in the cytoplasm. The enzyme catalyses phosphoenolpyruvate + UDP-N-acetyl-alpha-D-glucosamine = UDP-N-acetyl-3-O-(1-carboxyvinyl)-alpha-D-glucosamine + phosphate. The protein operates within cell wall biogenesis; peptidoglycan biosynthesis. Cell wall formation. Adds enolpyruvyl to UDP-N-acetylglucosamine. The polypeptide is UDP-N-acetylglucosamine 1-carboxyvinyltransferase (Pseudomonas putida (Arthrobacter siderocapsulatus)).